The chain runs to 155 residues: Ribosome maturation factor RimP (155 aa).

The protein belongs to the RimP family.

The protein localises to the cytoplasm. In terms of biological role, required for maturation of 30S ribosomal subunits. In Agathobacter rectalis (strain ATCC 33656 / DSM 3377 / JCM 17463 / KCTC 5835 / VPI 0990) (Eubacterium rectale), this protein is Ribosome maturation factor RimP.